A 539-amino-acid polypeptide reads, in one-letter code: Sorting nexin-27 (539 aa).

Residues 1-40 are disordered; sequence MADEDGEGIHPSAPHRNGGGGGGSGLHCAGNGGGGGGGPR. Residues 17–39 show a composition bias toward gly residues; sequence NGGGGGGSGLHCAGNGGGGGGGP. Positions 41-134 constitute a PDZ domain; that stretch reads VVRIVKSESG…ELILTVLSVP (94 aa). Residues Ser-49 and Ser-60 each carry the phosphoserine modification. The PX domain occupies 159–267; it reads QAVPISVPTY…EFLSESDENY (109 aa). The region spanning 271–360 is the Ras-associating domain; the sequence is SDVELRVALP…TCLTIRKWLF (90 aa). Residues 271–360 are FERM-like region F1; the sequence is SDVELRVALP…TCLTIRKWLF (90 aa). Positions 371 to 419 are FERM-like region F2; that stretch reads NDLAVTYFFHQAVDDVKKGYIKAEEKSYQLQKLHEQRKMVMYLNMLRTC. The interval 423–523 is FERM-like region F3; the sequence is NEIIFPHCAC…RVFCELKWRK (101 aa).

As to quaternary structure, core component of the SNX27-retromer, a multiprotein complex composed of SNX27, the WASH complex and the retromer complex. Interacts (via the FERM-like regions) with the WASH complex. Interacts with SNX1. Interacts with CYTIP. Interacts with DGKZ. Interacts with MCC. Interacts (via PDZ domain) with a number of target transmembrane proteins (via PDZ-binding motif): ABCC4, ADRB2, ARHGEF7, GRIA1, GRIA2, GRIN1, GRIN2A GRIN2C, KCNJ6, KCNJ9 and SLC2A1/GLUT1. Interacts (via PDZ domains) with SLC9A3; directs SLC9A3 membrane insertion from early endosomes to the plasma membrane. Expressed in cells of hematopoietic origin.

The protein localises to the early endosome membrane. It is found in the cytoplasm. It localises to the cytosol. In terms of biological role, involved in the retrograde transport from endosome to plasma membrane, a trafficking pathway that promotes the recycling of internalized transmembrane proteins. Following internalization, endocytosed transmembrane proteins are delivered to early endosomes and recycled to the plasma membrane instead of being degraded in lysosomes. SNX27 specifically binds and directs sorting of a subset of transmembrane proteins containing a PDZ-binding motif at the C-terminus: following interaction with target transmembrane proteins, associates with the retromer complex, preventing entry into the lysosomal pathway, and promotes retromer-tubule based plasma membrane recycling. SNX27 also binds with the WASH complex. Interacts with membranes containing phosphatidylinositol-3-phosphate (PtdIns(3P)). May participate in establishment of natural killer cell polarity. Recruits CYTIP to early endosomes. The polypeptide is Sorting nexin-27 (Snx27) (Mus musculus (Mouse)).